Reading from the N-terminus, the 307-residue chain is High-affinity branched-chain amino acid transport system permease protein BraD (307 aa).

A run of 10 helical transmembrane segments spans residues 21 to 41 (YALI…INFA), 45 to 65 (VYMI…MMGL), 70 to 90 (LMML…GYSI), 104 to 124 (LIPL…VMLS), 132 to 152 (IPTL…GVVI), 154 to 174 (YMQI…TLFI), 203 to 223 (IIAL…VLLG), 224 to 244 (MQYG…AFTA), 245 to 265 (AVLG…LLGV), and 280 to 300 (DVVA…GILG).

The protein belongs to the binding-protein-dependent transport system permease family. LivHM subfamily.

It is found in the cell inner membrane. In terms of biological role, component of the high affinity leucine, isoleucine, valine, transport system (LIV-I), which is operative without Na(+) and is specific for alanine and threonine, in addition to branched-chain amino acids. The sequence is that of High-affinity branched-chain amino acid transport system permease protein BraD (braD) from Pseudomonas aeruginosa (strain ATCC 15692 / DSM 22644 / CIP 104116 / JCM 14847 / LMG 12228 / 1C / PRS 101 / PAO1).